The following is a 65-amino-acid chain: U11-theraphotoxin-Cg1b (65 aa).

Positions 1–21 (MKTTILVVILGLTLLFALSAA) are cleaved as a signal peptide. Residues 22-29 (TELKDEER) constitute a propeptide that is removed on maturation. 3 disulfides stabilise this stretch: Cys31/Cys45, Cys38/Cys50, and Cys44/Cys57.

The protein belongs to the neurotoxin 10 (Hwtx-1) family. 32 (Jztx-16) subfamily. Expressed by the venom gland.

It is found in the secreted. Its function is as follows. Probable ion channel inhibitor. The polypeptide is U11-theraphotoxin-Cg1b (Chilobrachys guangxiensis (Chinese earth tiger tarantula)).